Reading from the N-terminus, the 112-residue chain is Large ribosomal subunit protein eL30x (112 aa).

Belongs to the eukaryotic ribosomal protein eL30 family.

The protein is Large ribosomal subunit protein eL30x (RPL30C) of Arabidopsis thaliana (Mouse-ear cress).